The primary structure comprises 131 residues: Small ribosomal subunit protein uS11 (131 aa).

Belongs to the universal ribosomal protein uS11 family. In terms of assembly, part of the 30S ribosomal subunit. Interacts with proteins S7 and S18. Binds to IF-3.

Its function is as follows. Located on the platform of the 30S subunit, it bridges several disparate RNA helices of the 16S rRNA. Forms part of the Shine-Dalgarno cleft in the 70S ribosome. This Chromobacterium violaceum (strain ATCC 12472 / DSM 30191 / JCM 1249 / CCUG 213 / NBRC 12614 / NCIMB 9131 / NCTC 9757 / MK) protein is Small ribosomal subunit protein uS11.